The chain runs to 149 residues: Early lymphoid activation gene protein (149 aa).

In terms of tissue distribution, expressed in heart, kidney, lung, and skeletal muscle, with lower levels in pancreas and liver.

Its function is as follows. May function as an early signal that helps mediate the activation of T-cells. The protein is Early lymphoid activation gene protein (DIAPH2-AS1) of Homo sapiens (Human).